An 852-amino-acid chain; its full sequence is DNA repair protein rhp54 (852 aa).

2 consecutive short sequence motifs (nuclear localization signal) follow at residues 35–51 (KKFKCPSLVISEKRKEL) and 178–181 (KRKK). A compositionally biased stretch (basic and acidic residues) spans 187-205 (NRKGKKEISDSEPESDHDS). The segment at 187–208 (NRKGKKEISDSEPESDHDSCVS) is disordered. Residues 281-459 (GRIDRCANGC…FSLLNFANPG (179 aa)) form the Helicase ATP-binding domain. 294–301 (DEMGLGKT) is an ATP binding site. The DEGH box signature appears at 410-413 (DEGH). One can recognise a Helicase C-terminal domain in the interval 614–767 (VLERMLYQIK…CVVDEAQDVE (154 aa)).

It belongs to the SNF2/RAD54 helicase family. As to quaternary structure, homohexamer. Interacts with rhp51.

Its subcellular location is the nucleus. It catalyses the reaction ATP + H2O = ADP + phosphate + H(+). Plays an essential role in homologous recombination (HR) which is a major pathway for repairing DNA double-strand breaks (DSBs), single-stranded DNA (ssDNA) gaps, and stalled or collapsed replication forks. Acts as a molecular motor during the homology search and guides RAD51 ssDNA along a donor dsDNA thereby changing the homology search from the diffusion-based mechanism to a motor-guided mechanism. Plays also an essential role in RAD51-mediated synaptic complex formation which consists of three strands encased in a protein filament formed once homology is recognized. Once DNA strand exchange occured, dissociates RAD51 from nucleoprotein filaments formed on dsDNA. This chain is DNA repair protein rhp54 (rhp54), found in Schizosaccharomyces pombe (strain 972 / ATCC 24843) (Fission yeast).